The chain runs to 362 residues: Histidinol-phosphate aminotransferase 1 (362 aa).

An N6-(pyridoxal phosphate)lysine modification is found at lysine 226.

The protein belongs to the class-II pyridoxal-phosphate-dependent aminotransferase family. Histidinol-phosphate aminotransferase subfamily. Homodimer. Pyridoxal 5'-phosphate is required as a cofactor.

It catalyses the reaction L-histidinol phosphate + 2-oxoglutarate = 3-(imidazol-4-yl)-2-oxopropyl phosphate + L-glutamate. Its pathway is amino-acid biosynthesis; L-histidine biosynthesis; L-histidine from 5-phospho-alpha-D-ribose 1-diphosphate: step 7/9. This Dechloromonas aromatica (strain RCB) protein is Histidinol-phosphate aminotransferase 1.